The primary structure comprises 338 residues: Lipoate-protein ligase A (338 aa).

The BPL/LPL catalytic domain maps to 29-216 (PATQRVLFLW…AFFAHYGERV (188 aa)). ATP contacts are provided by residues Arg71, 76–79 (GAVF), and Lys134. A (R)-lipoate-binding site is contributed by Lys134.

Belongs to the LplA family. In terms of assembly, monomer.

The protein localises to the cytoplasm. It carries out the reaction L-lysyl-[lipoyl-carrier protein] + (R)-lipoate + ATP = N(6)-[(R)-lipoyl]-L-lysyl-[lipoyl-carrier protein] + AMP + diphosphate + H(+). Its pathway is protein modification; protein lipoylation via exogenous pathway; protein N(6)-(lipoyl)lysine from lipoate: step 1/2. The protein operates within protein modification; protein lipoylation via exogenous pathway; protein N(6)-(lipoyl)lysine from lipoate: step 2/2. In terms of biological role, catalyzes both the ATP-dependent activation of exogenously supplied lipoate to lipoyl-AMP and the transfer of the activated lipoyl onto the lipoyl domains of lipoate-dependent enzymes. This Salmonella choleraesuis (strain SC-B67) protein is Lipoate-protein ligase A.